Here is a 129-residue protein sequence, read N- to C-terminus: Class I hydrophobin 11 (129 aa).

An N-terminal signal peptide occupies residues 1–19 (MRLTPLLAALALPLLTVLA). 4 disulfide bridges follow: Cys-48–Cys-106, Cys-55–Cys-100, Cys-56–Cys-89, and Cys-107–Cys-122.

Belongs to the fungal hydrophobin family. Self-assembles to form functional amyloid fibrils called rodlets. Self-assembly into fibrillar rodlets occurs spontaneously at hydrophobic:hydrophilic interfaces and the rodlets further associate laterally to form amphipathic monolayers.

The protein localises to the secreted. The protein resides in the cell wall. Its function is as follows. Aerial growth, conidiation, and dispersal of filamentous fungi in the environment rely upon a capability of their secreting small amphipathic proteins called hydrophobins (HPBs) with low sequence identity. Class I can self-assemble into an outermost layer of rodlet bundles on aerial cell surfaces, conferring cellular hydrophobicity that supports fungal growth, development and dispersal; whereas Class II form highly ordered films at water-air interfaces through intermolecular interactions but contribute nothing to the rodlet structure. The chain is Class I hydrophobin 11 from Pleurotus ostreatus (strain PC15) (Oyster mushroom).